The primary structure comprises 167 residues: Urease accessory protein UreE (167 aa).

Belongs to the UreE family.

The protein resides in the cytoplasm. In terms of biological role, involved in urease metallocenter assembly. Binds nickel. Probably functions as a nickel donor during metallocenter assembly. The polypeptide is Urease accessory protein UreE (Pseudomonas paraeruginosa (strain DSM 24068 / PA7) (Pseudomonas aeruginosa (strain PA7))).